A 575-amino-acid polypeptide reads, in one-letter code: Guanine nucleotide-binding protein-like 3-like protein (575 aa).

A compositionally biased stretch (basic residues) spans 1-30; sequence MMKLRHKNKKPGKGSKGCKKPAKQNGKKAA. The disordered stretch occupies residues 1-75; it reads MMKLRHKNKK…AAREQERHRR (75 aa). Residues 9–28 form a required for nucleolar localization region; sequence KKPGKGSKGCKKPAKQNGKK. Basic and acidic residues predominate over residues 42 to 72; that stretch reads SNDHASREAELKKKRVGEMREKQQAAREQER. Positions 51 to 79 form a coiled coil; the sequence is ELKKKRVGEMREKQQAAREQERHRRRTIE. A CP-type G domain is found at 118–303; that stretch reads YKEFHKVVEY…LLDAPGIVPG (186 aa). GTP-binding positions include 166-169, 252-259, and 296-299; these read NKID, GLPNVGKS, and DAPG. A Glycyl lysine isopeptide (Lys-Gly) (interchain with G-Cter in SUMO1) cross-link involves residue K470.

This sequence belongs to the TRAFAC class YlqF/YawG GTPase family. In terms of assembly, interacts with MDM2; this interaction, which occurs in the nucleoplasm, stabilizes MDM2. Indirectly interacts with TP53, via MDM2-binding. Interacts with TERF1; this interaction probably occurs in the nucleoplasm and is increased during mitosis, when the nucleolus is disassembled. This binding may promote TERF1 homodimerization. Interacts with TERT.

The protein localises to the nucleus. The protein resides in the nucleolus. Functionally, stabilizes TERF1 telomeric association by preventing TERF1 recruitment by PML. Stabilizes TERF1 protein by preventing its ubiquitination and hence proteasomal degradation. Does so by interfering with TERF1-binding to FBXO4 E3 ubiquitin-protein ligase. Required for cell proliferation. By stabilizing TRF1 protein during mitosis, promotes metaphase-to-anaphase transition. Stabilizes MDM2 protein by preventing its ubiquitination, and hence proteasomal degradation. By acting on MDM2, may affect TP53 activity. Required for normal processing of ribosomal pre-rRNA. Binds GTP. In Bos taurus (Bovine), this protein is Guanine nucleotide-binding protein-like 3-like protein (GNL3L).